The primary structure comprises 329 residues: Phenylalanine--tRNA ligase alpha subunit (329 aa).

Glutamate 246 is a Mg(2+) binding site.

It belongs to the class-II aminoacyl-tRNA synthetase family. Phe-tRNA synthetase alpha subunit type 1 subfamily. In terms of assembly, tetramer of two alpha and two beta subunits. The cofactor is Mg(2+).

The protein resides in the cytoplasm. It catalyses the reaction tRNA(Phe) + L-phenylalanine + ATP = L-phenylalanyl-tRNA(Phe) + AMP + diphosphate + H(+). The polypeptide is Phenylalanine--tRNA ligase alpha subunit (Helicobacter hepaticus (strain ATCC 51449 / 3B1)).